Here is a 236-residue protein sequence, read N- to C-terminus: Syntaxin-8 (236 aa).

Over Met-1–Gly-215 the chain is Cytoplasmic. The stretch at Val-42 to Ala-65 forms a coiled coil. Positions Gln-145–Val-207 constitute a t-SNARE coiled-coil homology domain. A Phosphoserine modification is found at Ser-160. A helical; Anchor for type IV membrane protein transmembrane segment spans residues Met-216–Val-232. Residues Trp-233–Lys-236 are Vesicular-facing.

The protein belongs to the syntaxin family. As to quaternary structure, forms a SNARE complex with STX7, VTI1B and VAMP8 which functions in the homotypic fusion of late endosomes. Part of the SNARE core complex containing STX7, VAMP8 and VTI1B. Interacts with VAMP8. Interacts with HECTD3. Interacts with TPC1. Post-translationally, ubiquitinated by HECTD3.

The protein resides in the membrane. Functionally, vesicle trafficking protein that functions in the early secretory pathway, possibly by mediating retrograde transport from cis-Golgi membranes to the ER. This is Syntaxin-8 (STX8) from Bos taurus (Bovine).